Here is a 595-residue protein sequence, read N- to C-terminus: Wee1-like protein kinase 1-B (595 aa).

The segment covering 1–17 (MNVQPRNMNVQPRNMNV) has biased composition (polar residues). The segment at 1-127 (MNVQPRNMNV…CPGTPPHKTF (127 aa)) is disordered. A compositionally biased stretch (pro residues) spans 111-122 (PTSPIPECPGTP). Phosphothreonine; by cdk1 is present on T186. The 271-residue stretch at 248-518 (FHELEKIGSG…SVALVKHSVL (271 aa)) folds into the Protein kinase domain. Residues 254-262 (IGSGEFGSV) and K277 contribute to the ATP site. D375 serves as the catalytic Proton acceptor. Mg(2+) contacts are provided by N380 and D412. Positions 526-563 (AEQLRIELDAEKFKNALLQKELKKAQIAKAAAEERAHF) form a coiled coil.

Belongs to the protein kinase superfamily. Ser/Thr protein kinase family. WEE1 subfamily. In terms of assembly, interacts (when phosphorylated at Thr-186) with pin1. Post-translationally, phosphorylation at Thr-186 during M-phase by cdk1 inhibits the kinase activity and leads to interaction with pin1. As to expression, zygotically expressed. Present in oocytes and postgastrula embryos (at least until the tailbud stage). Expression begins at the midblastula stage and increases after the early gastrula stage.

Its subcellular location is the nucleus. It catalyses the reaction L-tyrosyl-[protein] + ATP = O-phospho-L-tyrosyl-[protein] + ADP + H(+). In terms of biological role, acts as a zygotic negative regulator of entry into mitosis (G2 to M transition) by protecting the nucleus from cytoplasmically activated cyclin B1-complexed cdk1 before the onset of mitosis by mediating phosphorylation of cdk1 on 'Tyr-15'. Specifically phosphorylates and inactivates cyclin B1-complexed cdk1 reaching a maximum during G2 phase and a minimum as cells enter M phase. Phosphorylation of cyclin B1-cdk1 occurs exclusively on 'Tyr-15' and phosphorylation of monomeric cdk1 does not occur. The polypeptide is Wee1-like protein kinase 1-B (wee1-b) (Xenopus laevis (African clawed frog)).